The primary structure comprises 440 residues: C4-dicarboxylate transport protein (440 aa).

The next 8 helical transmembrane spans lie at 8–28 (LYLQ…LFPA), 40–60 (FIKL…VTGI), 74–94 (LKGL…GLVV), 147–167 (GDIL…AALK), 187–207 (IVGF…AFTV), 221–241 (LIAC…GLVL), 288–308 (VVGL…SIYL), and 354–374 (AATL…LLGV). The tract at residues 419-440 (DEVEPANDPEPPAMAAGLGLHG) is disordered.

The protein belongs to the dicarboxylate/amino acid:cation symporter (DAACS) (TC 2.A.23) family.

It is found in the cell inner membrane. In terms of biological role, responsible for the transport of dicarboxylates such as succinate, fumarate, and malate from the periplasm across the membrane. This is C4-dicarboxylate transport protein from Anaeromyxobacter dehalogenans (strain 2CP-C).